Consider the following 337-residue polypeptide: UDP-N-acetylenolpyruvoylglucosamine reductase (337 aa).

The FAD-binding PCMH-type domain maps to 16-187 (ALPGRAARYQ…TSVIFRLAKA (172 aa)). R160 is an active-site residue. The active-site Proton donor is S237. E333 is a catalytic residue.

FAD serves as cofactor.

It localises to the cytoplasm. The catalysed reaction is UDP-N-acetyl-alpha-D-muramate + NADP(+) = UDP-N-acetyl-3-O-(1-carboxyvinyl)-alpha-D-glucosamine + NADPH + H(+). It functions in the pathway cell wall biogenesis; peptidoglycan biosynthesis. Functionally, cell wall formation. This chain is UDP-N-acetylenolpyruvoylglucosamine reductase, found in Dechloromonas aromatica (strain RCB).